Reading from the N-terminus, the 341-residue chain is Foldase protein PrsA (341 aa).

The N-terminal stretch at 1-22 is a signal peptide; that stretch reads MKNIGRLAVTALIAVFIFSVTG. Cys23 carries N-palmitoyl cysteine lipidation. Residue Cys23 is the site of S-diacylglycerol cysteine attachment. Residues 199–291 enclose the PpiC domain; the sequence is PNKMHLAHIL…FGYHIIKCIK (93 aa).

The protein belongs to the PrsA family.

Its subcellular location is the cell membrane. The catalysed reaction is [protein]-peptidylproline (omega=180) = [protein]-peptidylproline (omega=0). Its function is as follows. Plays a major role in protein secretion by helping the post-translocational extracellular folding of several secreted proteins. This chain is Foldase protein PrsA, found in Clostridium kluyveri (strain NBRC 12016).